The sequence spans 293 residues: Protease HtpX homolog (293 aa).

The next 2 membrane-spanning stretches (helical) occupy residues 6 to 26 (VAVM…LIGG) and 28 to 48 (SGMV…YWNS). Zn(2+) is bound at residue His-130. Residue Glu-131 is part of the active site. Position 134 (His-134) interacts with Zn(2+). 2 consecutive transmembrane segments (helical) span residues 145–165 (LTAT…FFGG) and 172–192 (PLGA…AMMV). A Zn(2+)-binding site is contributed by Glu-201.

Belongs to the peptidase M48B family. Zn(2+) is required as a cofactor.

It localises to the cell inner membrane. The chain is Protease HtpX homolog from Rhodospirillum rubrum (strain ATCC 11170 / ATH 1.1.1 / DSM 467 / LMG 4362 / NCIMB 8255 / S1).